The primary structure comprises 330 residues: DNA-directed RNA polymerase subunit alpha (330 aa).

Positions 1 to 236 (MQGSVTEFLK…EQLDAFVDLR (236 aa)) are alpha N-terminal domain (alpha-NTD). The tract at residues 250 to 330 (FDPILLRPVD…NWPPASIAED (81 aa)) is alpha C-terminal domain (alpha-CTD).

Belongs to the RNA polymerase alpha chain family. In terms of assembly, homodimer. The RNAP catalytic core consists of 2 alpha, 1 beta, 1 beta' and 1 omega subunit. When a sigma factor is associated with the core the holoenzyme is formed, which can initiate transcription.

It catalyses the reaction RNA(n) + a ribonucleoside 5'-triphosphate = RNA(n+1) + diphosphate. Functionally, DNA-dependent RNA polymerase catalyzes the transcription of DNA into RNA using the four ribonucleoside triphosphates as substrates. The protein is DNA-directed RNA polymerase subunit alpha of Vibrio parahaemolyticus serotype O3:K6 (strain RIMD 2210633).